An 86-amino-acid chain; its full sequence is Small ribosomal subunit protein bS20 (86 aa).

Belongs to the bacterial ribosomal protein bS20 family.

Functionally, binds directly to 16S ribosomal RNA. The protein is Small ribosomal subunit protein bS20 of Rhodococcus opacus (strain B4).